We begin with the raw amino-acid sequence, 218 residues long: Large ribosomal subunit protein uL4 (218 aa).

The segment at Ala46–Ala100 is disordered. A compositionally biased stretch (basic residues) spans Gly62–Gly73.

It belongs to the universal ribosomal protein uL4 family. In terms of assembly, part of the 50S ribosomal subunit.

Its function is as follows. One of the primary rRNA binding proteins, this protein initially binds near the 5'-end of the 23S rRNA. It is important during the early stages of 50S assembly. It makes multiple contacts with different domains of the 23S rRNA in the assembled 50S subunit and ribosome. Forms part of the polypeptide exit tunnel. The sequence is that of Large ribosomal subunit protein uL4 from Corynebacterium efficiens (strain DSM 44549 / YS-314 / AJ 12310 / JCM 11189 / NBRC 100395).